We begin with the raw amino-acid sequence, 473 residues long: Spliceosome-associated protein CWC27 homolog (473 aa).

S2 carries the post-translational modification N-acetylserine. The PPIase cyclophilin-type domain maps to T11–V166. Positions E178–K193 are enriched in basic and acidic residues. 3 disordered regions span residues E178–K197, S203–E383, and I401–R473. Residues S206–K230 are a coiled coil. Over residues S231–H241 the composition is skewed to basic and acidic residues. Positions R252–D254 match the Cell attachment site motif. Acidic residues predominate over residues A256–E266. 2 stretches are compositionally biased toward basic and acidic residues: residues G267–E348 and E360–R372. Residues V311–T378 adopt a coiled-coil conformation. S347 is modified (phosphoserine). The span at P405–G419 shows a compositional bias: acidic residues. Basic and acidic residues-rich tracts occupy residues Q426 to S438 and R458 to R473.

It belongs to the cyclophilin-type PPIase family. Part of the activated spliceosome B/catalytic step 1 spliceosome, one of the forms of the spliceosome which has a well-formed active site but still cannot catalyze the branching reaction and is composed at least of 52 proteins, the U2, U5 and U6 snRNAs and the pre-mRNA. Recruited during early steps of activated spliceosome B maturation, it is probably one of the first proteins released from this complex as he matures to the spliceosome C complex. Component of the minor spliceosome, which splices U12-type introns.

The protein resides in the nucleus. Functionally, as part of the spliceosome, plays a role in pre-mRNA splicing. Probable inactive PPIase with no peptidyl-prolyl cis-trans isomerase activity. As a component of the minor spliceosome, involved in the splicing of U12-type introns in pre-mRNAs. The protein is Spliceosome-associated protein CWC27 homolog of Bos taurus (Bovine).